A 292-amino-acid polypeptide reads, in one-letter code: 4-hydroxy-tetrahydrodipicolinate synthase (292 aa).

Threonine 48 contacts pyruvate. Tyrosine 136 functions as the Proton donor/acceptor in the catalytic mechanism. The Schiff-base intermediate with substrate role is filled by lysine 164. Residue isoleucine 204 coordinates pyruvate.

It belongs to the DapA family. Homotetramer; dimer of dimers.

Its subcellular location is the cytoplasm. It carries out the reaction L-aspartate 4-semialdehyde + pyruvate = (2S,4S)-4-hydroxy-2,3,4,5-tetrahydrodipicolinate + H2O + H(+). Its pathway is amino-acid biosynthesis; L-lysine biosynthesis via DAP pathway; (S)-tetrahydrodipicolinate from L-aspartate: step 3/4. Its function is as follows. Catalyzes the condensation of (S)-aspartate-beta-semialdehyde [(S)-ASA] and pyruvate to 4-hydroxy-tetrahydrodipicolinate (HTPA). This Acetivibrio thermocellus (strain ATCC 27405 / DSM 1237 / JCM 9322 / NBRC 103400 / NCIMB 10682 / NRRL B-4536 / VPI 7372) (Clostridium thermocellum) protein is 4-hydroxy-tetrahydrodipicolinate synthase.